The sequence spans 399 residues: Chalcone synthase 2 (399 aa).

Residue Cys-166 is part of the active site.

It belongs to the thiolase-like superfamily. Chalcone/stilbene synthases family.

It catalyses the reaction (E)-4-coumaroyl-CoA + 3 malonyl-CoA + 3 H(+) = 2',4,4',6'-tetrahydroxychalcone + 3 CO2 + 4 CoA. Its pathway is secondary metabolite biosynthesis; flavonoid biosynthesis. The primary product of this enzyme is 4,2',4',6'-tetrahydroxychalcone (also termed naringenin-chalcone or chalcone) which can under specific conditions spontaneously isomerize into naringenin. Substrate preference is feruloyl-CoA = caffeoyl-CoA &gt;&gt; cinnamoyl-CoA. The chain is Chalcone synthase 2 (CHS2) from Hordeum vulgare (Barley).